The following is a 488-amino-acid chain: Glutamate synthase [NADPH] small chain (488 aa).

In terms of domain architecture, 4Fe-4S ferredoxin-type spans 38–69 (ESLRQQATRCMDCGIPFCHNGCPLGNLIPEWN).

The cofactor is [4Fe-4S] cluster.

It catalyses the reaction 2 L-glutamate + NADP(+) = L-glutamine + 2-oxoglutarate + NADPH + H(+). Its pathway is amino-acid biosynthesis; L-glutamate biosynthesis via GLT pathway; L-glutamate from 2-oxoglutarate and L-glutamine (NADP(+) route): step 1/1. The chain is Glutamate synthase [NADPH] small chain (gltD) from Mycobacterium tuberculosis (strain CDC 1551 / Oshkosh).